Here is a 203-residue protein sequence, read N- to C-terminus: Secreted phosphoprotein 24 (203 aa).

Positions 1–23 (MEKMVMKMLVIFVFGMNHWTCTG) are cleaved as a signal peptide. 2 disulfide bridges follow: C86-C97 and C110-C128. At S90 the chain carries Phosphoserine. Residues S138, S139, S166, and S175 each carry the phosphoserine modification. Positions 155-174 (NSHLLGLTPDRSRGEPLYER) are disordered. Residues 164–174 (DRSRGEPLYER) are compositionally biased toward basic and acidic residues.

Belongs to the SPP2 family. Multiply phosphorylated at serine residues. In terms of processing, phosphorylation sites are present in the extracellular medium.

It is found in the secreted. In terms of biological role, could coordinate an aspect of bone turnover. The protein is Secreted phosphoprotein 24 (SPP2) of Ovis aries (Sheep).